The following is a 348-amino-acid chain: Uroporphyrinogen decarboxylase (348 aa).

Substrate is bound by residues 27–31, Phe-46, Asp-76, Tyr-152, Ser-207, and His-320; that span reads RQAGR.

The protein belongs to the uroporphyrinogen decarboxylase family. In terms of assembly, homodimer.

It is found in the cytoplasm. The enzyme catalyses uroporphyrinogen III + 4 H(+) = coproporphyrinogen III + 4 CO2. The protein operates within porphyrin-containing compound metabolism; protoporphyrin-IX biosynthesis; coproporphyrinogen-III from 5-aminolevulinate: step 4/4. Its function is as follows. Catalyzes the decarboxylation of four acetate groups of uroporphyrinogen-III to yield coproporphyrinogen-III. This Bacillus thuringiensis (strain Al Hakam) protein is Uroporphyrinogen decarboxylase.